The following is a 504-amino-acid chain: Maturase K (504 aa).

It belongs to the intron maturase 2 family. MatK subfamily.

The protein localises to the plastid. The protein resides in the chloroplast. In terms of biological role, usually encoded in the trnK tRNA gene intron. Probably assists in splicing its own and other chloroplast group II introns. This Thlaspi arvense (Field penny-cress) protein is Maturase K.